Consider the following 278-residue polypeptide: Digeranylgeranylglyceryl phosphate synthase (278 aa).

The next 7 membrane-spanning stretches (helical) occupy residues 12 to 32 (LKNCLTAGFGALISGLIASNF), 34 to 54 (FGALFPLILAFLVVFFICGFG), 92 to 112 (IMIFGLIISLFNIYCFLMAVL), 129 to 149 (IIGNMLVAYLTGSVFIFGGIA), 199 to 219 (IYISLGLLLIAIGLSFLPYLT), 221 to 241 (IFGIYYLLMILICNLMFLAGF), and 257 to 277 (SKNIKLITNFVLIAFIIGSIF).

The protein belongs to the UbiA prenyltransferase family. DGGGP synthase subfamily. Mg(2+) is required as a cofactor.

The protein localises to the cell membrane. It carries out the reaction sn-3-O-(geranylgeranyl)glycerol 1-phosphate + (2E,6E,10E)-geranylgeranyl diphosphate = 2,3-bis-O-(geranylgeranyl)-sn-glycerol 1-phosphate + diphosphate. Its pathway is membrane lipid metabolism; glycerophospholipid metabolism. Its function is as follows. Prenyltransferase that catalyzes the transfer of the geranylgeranyl moiety of geranylgeranyl diphosphate (GGPP) to the C2 hydroxyl of (S)-3-O-geranylgeranylglyceryl phosphate (GGGP). This reaction is the second ether-bond-formation step in the biosynthesis of archaeal membrane lipids. The sequence is that of Digeranylgeranylglyceryl phosphate synthase from Methanococcus vannielii (strain ATCC 35089 / DSM 1224 / JCM 13029 / OCM 148 / SB).